Consider the following 339-residue polypeptide: Heat-inducible transcription repressor HrcA (339 aa).

Belongs to the HrcA family.

Its function is as follows. Negative regulator of class I heat shock genes (grpE-dnaK-dnaJ and groELS operons). Prevents heat-shock induction of these operons. The sequence is that of Heat-inducible transcription repressor HrcA from Thiobacillus denitrificans (strain ATCC 25259 / T1).